A 637-amino-acid polypeptide reads, in one-letter code: Chaperone protein HtpG (637 aa).

Positions 1–345 (MSQQETHGFQ…SNDLPLNVSR (345 aa)) are a; substrate-binding. Residues 346-562 (EILQDNQVTT…EGEMSTQMIK (217 aa)) form a b region. The c stretch occupies residues 563–637 (LMQAAGQPVP…TNQMLLASVK (75 aa)).

This sequence belongs to the heat shock protein 90 family. Homodimer.

It localises to the cytoplasm. Molecular chaperone. Has ATPase activity. The polypeptide is Chaperone protein HtpG (Shewanella frigidimarina (strain NCIMB 400)).